A 458-amino-acid polypeptide reads, in one-letter code: MSVLVVGMSHQSAPVALLEKLSMDETVQNDTCRAMVSAGSLSEAMIISTCNRLEVYTVTNSFHSGVQDVVHNLAEVSGVEEEKLRSYLYVRYADAAAEHLMMVTSGLDSMVVGEQQIIGQVRTAYQFASEQGTVGPRIHALAQSALRTGKRVHSETEIDEAGSSMVSFAFDQALSRMGREDLAGKRVLILGAGAMASLAATHAGRLGAHLIIANRTIARAERVAQHAHEAGVYADVIDFSERAQALRDVDVAISATGAQGFTITAADVERYHVADRELMLVDLSLPRDIDDAVAEAEGVDLINIERLNNSLQAADTDLAAGTSPHAQARRIVSEELESYASEQRVRDVVPAVSALRKRAANLVQCEVARMEQKHPELDERQMGDINRALKRVADKLLHEPTVRAKQLAANSGTVSHETALQELFGLQLEGSGVAVDMAELPDAAQMEAAENTKEEKDA.

Residues 49-52 (TCNR), Ser109, 114-116 (EQQ), and Gln120 contribute to the substrate site. Cys50 serves as the catalytic Nucleophile. NADP(+) is bound at residue 191–196 (GAGAMA).

The protein belongs to the glutamyl-tRNA reductase family. In terms of assembly, homodimer.

It carries out the reaction (S)-4-amino-5-oxopentanoate + tRNA(Glu) + NADP(+) = L-glutamyl-tRNA(Glu) + NADPH + H(+). It functions in the pathway porphyrin-containing compound metabolism; protoporphyrin-IX biosynthesis; 5-aminolevulinate from L-glutamyl-tRNA(Glu): step 1/2. Its function is as follows. Catalyzes the NADPH-dependent reduction of glutamyl-tRNA(Glu) to glutamate 1-semialdehyde (GSA). This Corynebacterium aurimucosum (strain ATCC 700975 / DSM 44827 / CIP 107346 / CN-1) (Corynebacterium nigricans) protein is Glutamyl-tRNA reductase.